The primary structure comprises 263 residues: Small ribosomal subunit protein eS4 (263 aa).

Positions 42 to 104 (LPLIIFLRNR…TGENFRLIYD (63 aa)) constitute an S4 RNA-binding domain.

This sequence belongs to the eukaryotic ribosomal protein eS4 family.

This Ictalurus punctatus (Channel catfish) protein is Small ribosomal subunit protein eS4 (rps4).